Here is a 339-residue protein sequence, read N- to C-terminus: tRNA N6-adenosine threonylcarbamoyltransferase (339 aa).

Residues histidine 107 and histidine 111 each contribute to the Fe cation site. Substrate-binding positions include 129-133 (LVSGG), aspartate 162, glycine 175, and asparagine 279. Aspartate 307 contacts Fe cation.

Belongs to the KAE1 / TsaD family. Fe(2+) is required as a cofactor.

Its subcellular location is the cytoplasm. The enzyme catalyses L-threonylcarbamoyladenylate + adenosine(37) in tRNA = N(6)-L-threonylcarbamoyladenosine(37) in tRNA + AMP + H(+). In terms of biological role, required for the formation of a threonylcarbamoyl group on adenosine at position 37 (t(6)A37) in tRNAs that read codons beginning with adenine. Is involved in the transfer of the threonylcarbamoyl moiety of threonylcarbamoyl-AMP (TC-AMP) to the N6 group of A37, together with TsaE and TsaB. TsaD likely plays a direct catalytic role in this reaction. The protein is tRNA N6-adenosine threonylcarbamoyltransferase of Campylobacter curvus (strain 525.92).